We begin with the raw amino-acid sequence, 650 residues long: Threonine--tRNA ligase (650 aa).

A TGS domain is found at 1-61 (MIKITFPDGA…DEDGTLEIVM (61 aa)). Residues 242–540 (DHRKLGKELD…LIETYKGAFP (299 aa)) form a catalytic region. Residues C336, H387, and H517 each contribute to the Zn(2+) site.

It belongs to the class-II aminoacyl-tRNA synthetase family. As to quaternary structure, homodimer. It depends on Zn(2+) as a cofactor.

Its subcellular location is the cytoplasm. It catalyses the reaction tRNA(Thr) + L-threonine + ATP = L-threonyl-tRNA(Thr) + AMP + diphosphate + H(+). Its function is as follows. Catalyzes the attachment of threonine to tRNA(Thr) in a two-step reaction: L-threonine is first activated by ATP to form Thr-AMP and then transferred to the acceptor end of tRNA(Thr). Also edits incorrectly charged L-seryl-tRNA(Thr). This chain is Threonine--tRNA ligase, found in Streptococcus suis (strain 98HAH33).